A 68-amino-acid chain; its full sequence is Peptide TsPep3 (68 aa).

An N-terminal signal peptide occupies residues 1 to 26 (MKLSCGFLLIFLVLSAMIATFSEVEA). Cystine bridges form between Cys30-Cys38, Cys33-Cys54, Cys37-Cys47, and Cys42-Cys52. A propeptide spanning residues 56–68 (GRSDLNEEFENYQ) is cleaved from the precursor.

In terms of tissue distribution, expressed by the venom gland.

It localises to the secreted. Its function is as follows. Probable weak potassium channel blocker. This is Peptide TsPep3 from Tityus serrulatus (Brazilian scorpion).